We begin with the raw amino-acid sequence, 147 residues long: UPF0306 protein YhbP (147 aa).

It belongs to the UPF0306 family.

This is UPF0306 protein YhbP from Salmonella agona (strain SL483).